The primary structure comprises 90 residues: uncharacterized protein (90 aa).

3 helical membrane-spanning segments follow: residues 5–27 (FDIL…IIYI), 40–62 (IYLS…TFVA), and 67–89 (MSVV…YSIV).

It is found in the cell membrane. This is an uncharacterized protein from Archaeoglobus fulgidus (strain ATCC 49558 / DSM 4304 / JCM 9628 / NBRC 100126 / VC-16).